The primary structure comprises 154 residues: Protein ripply (154 aa).

The WRPW motif motif lies at 38–41 (WRPW). Disordered regions lie at residues 54–86 (IRER…FQHP) and 121–154 (EDPA…PILN). The ripply homology domain stretch occupies residues 85 to 119 (HPVKLHWSKPVYDYMYQYGKQLLDAFPVQATICIV). The segment covering 121-140 (EDPAQSDDSDFESDYEDDSD) has biased composition (acidic residues).

This sequence belongs to the ripply family. In the late gastrula stage, expression appears in the dorsal presomitic mesoderm and in the first three pairs of nascent somites. Expressed strongly in forming somites and then expression is rapidly down-regulated except in the first somite pair where expression is maintained for a longer period. Also expressed in the presumptive notochord and in the tail bud at the 48 hour larval stage. Expression disappears by the 72 hour stage.

Its subcellular location is the nucleus. May play a role in somitogenesis. The protein is Protein ripply of Branchiostoma belcheri (Amphioxus).